We begin with the raw amino-acid sequence, 255 residues long: Borealin-2 (255 aa).

2 disordered regions span residues 1 to 24 and 107 to 156; these read MAPR…HSFE and IQKP…STGS. Over residues 124–135 the composition is skewed to polar residues; sequence AGQQRSSSQSKT.

The protein belongs to the borealin family. As to quaternary structure, component of the CPC complex.

The protein localises to the nucleus. The protein resides in the chromosome. Its subcellular location is the centromere. Functionally, component of the chromosomal passenger complex (CPC), a complex that acts as a key regulator of mitosis. The CPC complex has essential functions at the centromere in ensuring correct chromosome alignment and segregation and is required for chromatin-induced microtubule stabilization and spindle assembly. The chain is Borealin-2 (cdca9) from Danio rerio (Zebrafish).